Reading from the N-terminus, the 274-residue chain is Protein TIC 20-I, chloroplastic (274 aa).

The N-terminal 65 residues, 1 to 65, are a transit peptide targeting the chloroplast; it reads MITGYSTPSA…ELPRVSRGVP (65 aa). A run of 4 helical transmembrane segments spans residues 130 to 152, 167 to 187, 200 to 220, and 229 to 249; these read LPYLMPLHETWMYAETAYHLHPF, IGRLPSWFLMAYFFVAYLGIV, VVMGMLLEIALQVIGTVSKWM, and FGMHFWTAVAFAYLFTVLESI.

The protein belongs to the Tic20 family. In terms of assembly, part of the Tic complex. Component of the 1-MD complex, composed of TIC20-I, TIC214, TIC100 and TIC56. Interacts with the translocating preproteins. Hydrolysis of ATP is essential for the formation of this complex. The 1-MD complex interacts with TIC21. In terms of tissue distribution, expressed in leaves, shoots and roots. High expression in mature photosynthetic tissues. Lower levels in non-photosynthetic tissues and roots.

The protein localises to the plastid. Its subcellular location is the chloroplast inner membrane. Its function is as follows. Involved in protein precursor import into chloroplasts. May be part of an intermediate translocation complex acting as a protein-conducting channel at the inner envelope. Seems to be specific for photosynthesis-related pre-proteins. Partially redundant with TIC20-IV, but not with TIC20-II or TIC20-V. The chain is Protein TIC 20-I, chloroplastic from Arabidopsis thaliana (Mouse-ear cress).